We begin with the raw amino-acid sequence, 246 residues long: Sugar fermentation stimulation protein homolog (246 aa).

It belongs to the SfsA family.

This chain is Sugar fermentation stimulation protein homolog, found in Prochlorococcus marinus (strain MIT 9301).